The primary structure comprises 122 residues: Large ribosomal subunit protein uL14 (122 aa).

It belongs to the universal ribosomal protein uL14 family. As to quaternary structure, part of the 50S ribosomal subunit. Forms a cluster with proteins L3 and L19. In the 70S ribosome, L14 and L19 interact and together make contacts with the 16S rRNA in bridges B5 and B8.

Its function is as follows. Binds to 23S rRNA. Forms part of two intersubunit bridges in the 70S ribosome. This is Large ribosomal subunit protein uL14 from Hyphomonas neptunium (strain ATCC 15444).